The following is a 265-amino-acid chain: Tryptophan synthase alpha chain (265 aa).

Active-site proton acceptor residues include Glu49 and Asp60.

It belongs to the TrpA family. As to quaternary structure, tetramer of two alpha and two beta chains.

It catalyses the reaction (1S,2R)-1-C-(indol-3-yl)glycerol 3-phosphate + L-serine = D-glyceraldehyde 3-phosphate + L-tryptophan + H2O. Its pathway is amino-acid biosynthesis; L-tryptophan biosynthesis; L-tryptophan from chorismate: step 5/5. In terms of biological role, the alpha subunit is responsible for the aldol cleavage of indoleglycerol phosphate to indole and glyceraldehyde 3-phosphate. This chain is Tryptophan synthase alpha chain, found in Desulfatibacillum aliphaticivorans.